The primary structure comprises 594 residues: UvrABC system protein C (594 aa).

A GIY-YIG domain is found at 13-99 (HSSGVYQYFD…IKQLKPKYNI (87 aa)). The region spanning 205–240 (DKLIKELELKMERLSNNLRFEEALIYRDRIAKIQKI) is the UVR domain.

The protein belongs to the UvrC family. In terms of assembly, interacts with UvrB in an incision complex.

The protein localises to the cytoplasm. Its function is as follows. The UvrABC repair system catalyzes the recognition and processing of DNA lesions. UvrC both incises the 5' and 3' sides of the lesion. The N-terminal half is responsible for the 3' incision and the C-terminal half is responsible for the 5' incision. This chain is UvrABC system protein C, found in Helicobacter pylori (strain HPAG1).